The sequence spans 174 residues: Recombination protein RecR (174 aa).

The C4-type zinc-finger motif lies at 30–45; sequence CNACRTFTEEEECTIC. The region spanning 54–149 is the Toprim domain; the sequence is GQLCIVEMPE…KVTRIAHGIP (96 aa).

It belongs to the RecR family.

May play a role in DNA repair. It seems to be involved in an RecBC-independent recombinational process of DNA repair. It may act with RecF and RecO. This Haemophilus ducreyi (strain 35000HP / ATCC 700724) protein is Recombination protein RecR.